The primary structure comprises 572 residues: DnaJ protein ERDJ3A (572 aa).

An N-terminal signal peptide occupies residues 1–23; the sequence is MVRTRLAISVVLVSTLLLLNVKA. A J domain is found at 27–91; the sequence is DPYKVLGVSK…EKRKNYDLYG (65 aa). The stretch at 394-423 forms a coiled coil; it reads ITVKNLKSAVQELGKLLEGLEKKNKKVSSK. Residues 419–439 are disordered; that stretch reads KVSSKSQAGQAPNESSEKIPL. Residues 422-432 are compositionally biased toward polar residues; it reads SKSQAGQAPNE. The N-linked (GlcNAc...) asparagine glycan is linked to asparagine 431.

As to quaternary structure, interacts with BIP1 and BIP3. The interaction with BIP1 and BIP3 activates the ATPase enzyme activities of BIP1 and BIP3. Post-translationally, not N-glycosylated. Expressed in roots, leaves, stems, flowers, mature pollen grains and growing pollen tubes.

It is found in the endoplasmic reticulum lumen. Functionally, regulates protein folding in the endoplasmic reticulum (ER) lumen. Functions probably as a co-molecular chaperone that is required for normal growth of pollen tubes under high-temperature stress. The chain is DnaJ protein ERDJ3A (ERDJ3A) from Arabidopsis thaliana (Mouse-ear cress).